Consider the following 110-residue polypeptide: uncharacterized protein (110 aa).

This is an uncharacterized protein from Human cytomegalovirus (strain AD169) (HHV-5).